Reading from the N-terminus, the 374-residue chain is Resuscitation-promoting factor Rpf2 (374 aa).

Residues 1 to 40 (MAPHQKSRINRINSTRSVPLRLATGGVLATLLIGGVTAAA) form the signal peptide. In terms of domain architecture, G5 spans 210–290 (IDRVDNTEIT…PATISRGTKT (81 aa)). The segment at 228 to 252 (PTYVDDPEAPAGDETVVEEGAPGTK) is disordered.

It belongs to the transglycosylase family. Rpf subfamily. Post-translationally, glycosylated; by Pmt, by at least mannose and galactose. Other unidentified sugars may also be present. In terms of processing, may be subject to proteolytic cleavage as multiple shorter forms are detected in gels. At least 3 non-glycosylated protein isoforms of 35, 40 and 42 kDa are seen in gels.

It localises to the secreted. The protein resides in the cell surface. Functionally, factor that stimulates resuscitation of dormant cells. Has peptidoglycan (PG) hydrolytic activity. Active in the pM concentration range. Has little to no effect on actively-growing cells. PG fragments could either directly activate the resuscitation pathway of dormant bacteria or serve as a substrate for endogenous Rpf, resulting in low molecular weight products with resuscitation activity. The sequence is that of Resuscitation-promoting factor Rpf2 (rpf2) from Corynebacterium glutamicum (strain ATCC 13032 / DSM 20300 / JCM 1318 / BCRC 11384 / CCUG 27702 / LMG 3730 / NBRC 12168 / NCIMB 10025 / NRRL B-2784 / 534).